Reading from the N-terminus, the 202-residue chain is Dephospho-CoA kinase (202 aa).

Positions 4–200 (VVGVTGGIGS…QRYLAATVAQ (197 aa)) constitute a DPCK domain. 12–17 (GSGKSA) lines the ATP pocket.

It belongs to the CoaE family.

Its subcellular location is the cytoplasm. The enzyme catalyses 3'-dephospho-CoA + ATP = ADP + CoA + H(+). It functions in the pathway cofactor biosynthesis; coenzyme A biosynthesis; CoA from (R)-pantothenate: step 5/5. Catalyzes the phosphorylation of the 3'-hydroxyl group of dephosphocoenzyme A to form coenzyme A. In Idiomarina loihiensis (strain ATCC BAA-735 / DSM 15497 / L2-TR), this protein is Dephospho-CoA kinase.